The sequence spans 290 residues: Agmatinase (290 aa).

Mn(2+)-binding residues include His112, Asp135, His137, Asp139, Asp216, and Asp218.

It belongs to the arginase family. Agmatinase subfamily. Mn(2+) serves as cofactor.

The enzyme catalyses agmatine + H2O = urea + putrescine. Its pathway is amine and polyamine biosynthesis; putrescine biosynthesis via agmatine pathway; putrescine from agmatine: step 1/1. Its function is as follows. Catalyzes the formation of putrescine from agmatine. The polypeptide is Agmatinase (speB) (Bacillus cereus (strain ATCC 14579 / DSM 31 / CCUG 7414 / JCM 2152 / NBRC 15305 / NCIMB 9373 / NCTC 2599 / NRRL B-3711)).